The sequence spans 78 residues: Large ribosomal subunit protein bL28 (78 aa).

Residues 1 to 31 (MAAHCQVTGAEPGFGHSISHSHRRNKRRFDP) form a disordered region.

Belongs to the bacterial ribosomal protein bL28 family.

This is Large ribosomal subunit protein bL28 from Paenarthrobacter aurescens (strain TC1).